The primary structure comprises 430 residues: Tyrosine--tRNA ligase (430 aa).

Residue Tyr32 participates in L-tyrosine binding. The 'HIGH' region motif lies at 37 to 46 (PTADSLHIGH). The L-tyrosine site is built by Tyr172 and Gln176. Residues 232–236 (KFGKT) carry the 'KMSKS' region motif. Lys235 lines the ATP pocket. In terms of domain architecture, S4 RNA-binding spans 362-430 (ISLVDLLADA…KKSYYLIIVE (69 aa)).

The protein belongs to the class-I aminoacyl-tRNA synthetase family. TyrS type 1 subfamily. In terms of assembly, homodimer.

It localises to the cytoplasm. The catalysed reaction is tRNA(Tyr) + L-tyrosine + ATP = L-tyrosyl-tRNA(Tyr) + AMP + diphosphate + H(+). Its function is as follows. Catalyzes the attachment of tyrosine to tRNA(Tyr) in a two-step reaction: tyrosine is first activated by ATP to form Tyr-AMP and then transferred to the acceptor end of tRNA(Tyr). The sequence is that of Tyrosine--tRNA ligase from Porphyromonas gingivalis (strain ATCC BAA-308 / W83).